An 82-amino-acid chain; its full sequence is Conotoxin Tx6.6 (82 aa).

The signal sequence occupies residues 1–19 (MKLTCVMIVAVLFLTAWTL). Positions 20 to 51 (VMADDSNNGLANLFSKLRDEMEDPEGSKLEKK) are excised as a propeptide. 3 disulfides stabilise this stretch: Cys53-Cys71, Cys60-Cys76, and Cys70-Cys81. Position 82 is an alanine amide; partial (Ala82).

It belongs to the O1 superfamily. As to expression, expressed by the venom duct.

Its subcellular location is the secreted. Functionally, omega-conotoxins act at presynaptic membranes, they bind and block voltage-gated calcium channels (Cav). This is Conotoxin Tx6.6 from Conus textile (Cloth-of-gold cone).